A 261-amino-acid chain; its full sequence is MAHQAHAYHMVDPSPWPLTGAIAALLMTSGLAIWFHFHSTTLMTLGLILLLLTMYQWWRDIIREGTFQGHHTPPVQKGLRYGMILFITSEVFFFLGFFWAFYHSSLAPTPELGGCWPPTGITPLDPFEVPLLNTAVLLASGVTVTWAHHSIMEGERKQAIQSLALTILLGFYFTALQAMEYYEAPFTIADGVYGSTFFVATGFHGLHVIIGSTFLAVCLLRQIQYHFTSEHHFGFEAAAWYWHFVDVVWLFLYVSIYWWGS.

Over 1 to 15 (MAHQAHAYHMVDPSP) the chain is Mitochondrial matrix. A helical membrane pass occupies residues 16-34 (WPLTGAIAALLMTSGLAIW). At 35–40 (FHFHST) the chain is on the mitochondrial intermembrane side. The chain crosses the membrane as a helical span at residues 41–66 (TLMTLGLILLLLTMYQWWRDIIREGT). At 67-72 (FQGHHT) the chain is on the mitochondrial matrix side. A helical transmembrane segment spans residues 73–105 (PPVQKGLRYGMILFITSEVFFFLGFFWAFYHSS). Over 106-128 (LAPTPELGGCWPPTGITPLDPFE) the chain is Mitochondrial intermembrane. Residues 129–152 (VPLLNTAVLLASGVTVTWAHHSIM) traverse the membrane as a helical segment. The Mitochondrial matrix portion of the chain corresponds to 153–155 (EGE). Residues 156–183 (RKQAIQSLALTILLGFYFTALQAMEYYE) traverse the membrane as a helical segment. Residues 184–190 (APFTIAD) are Mitochondrial intermembrane-facing. Residues 191–223 (GVYGSTFFVATGFHGLHVIIGSTFLAVCLLRQI) form a helical membrane-spanning segment. Topologically, residues 224 to 232 (QYHFTSEHH) are mitochondrial matrix. A helical membrane pass occupies residues 233-256 (FGFEAAAWYWHFVDVVWLFLYVSI). Residues 257–261 (YWWGS) lie on the Mitochondrial intermembrane side of the membrane.

It belongs to the cytochrome c oxidase subunit 3 family. In terms of assembly, component of the cytochrome c oxidase (complex IV, CIV), a multisubunit enzyme composed of 14 subunits. The complex is composed of a catalytic core of 3 subunits MT-CO1, MT-CO2 and MT-CO3, encoded in the mitochondrial DNA, and 11 supernumerary subunits COX4I, COX5A, COX5B, COX6A, COX6B, COX6C, COX7A, COX7B, COX7C, COX8 and NDUFA4, which are encoded in the nuclear genome. The complex exists as a monomer or a dimer and forms supercomplexes (SCs) in the inner mitochondrial membrane with NADH-ubiquinone oxidoreductase (complex I, CI) and ubiquinol-cytochrome c oxidoreductase (cytochrome b-c1 complex, complex III, CIII), resulting in different assemblies (supercomplex SCI(1)III(2)IV(1) and megacomplex MCI(2)III(2)IV(2)).

The protein localises to the mitochondrion inner membrane. It catalyses the reaction 4 Fe(II)-[cytochrome c] + O2 + 8 H(+)(in) = 4 Fe(III)-[cytochrome c] + 2 H2O + 4 H(+)(out). In terms of biological role, component of the cytochrome c oxidase, the last enzyme in the mitochondrial electron transport chain which drives oxidative phosphorylation. The respiratory chain contains 3 multisubunit complexes succinate dehydrogenase (complex II, CII), ubiquinol-cytochrome c oxidoreductase (cytochrome b-c1 complex, complex III, CIII) and cytochrome c oxidase (complex IV, CIV), that cooperate to transfer electrons derived from NADH and succinate to molecular oxygen, creating an electrochemical gradient over the inner membrane that drives transmembrane transport and the ATP synthase. Cytochrome c oxidase is the component of the respiratory chain that catalyzes the reduction of oxygen to water. Electrons originating from reduced cytochrome c in the intermembrane space (IMS) are transferred via the dinuclear copper A center (CU(A)) of subunit 2 and heme A of subunit 1 to the active site in subunit 1, a binuclear center (BNC) formed by heme A3 and copper B (CU(B)). The BNC reduces molecular oxygen to 2 water molecules using 4 electrons from cytochrome c in the IMS and 4 protons from the mitochondrial matrix. The polypeptide is Cytochrome c oxidase subunit 3 (mt-co3) (Carassius auratus (Goldfish)).